A 260-amino-acid chain; its full sequence is Pro-opiomelanocortin (260 aa).

The N-terminal stretch at 1-25 is a signal peptide; it reads MLQPVWSCILALLGVFIFHVGEVRS. Glutamine 26 is modified (pyrrolidone carboxylic acid). Phenylalanine amide is present on phenylalanine 86. The N-linked (GlcNAc...) asparagine glycan is linked to asparagine 90. Residues 104-138 constitute a propeptide that is removed on maturation; sequence EDIANYPILNLLTGSDNQNTQQGIMEDEAVDRQDS. The residue at position 153 (valine 153) is a Valine amide.

Belongs to the POMC family. Post-translationally, specific enzymatic cleavages at paired basic residues yield the different active peptides.

It localises to the secreted. In terms of biological role, stimulates the adrenal glands to release cortisol. Its function is as follows. Anorexigenic peptide. Increases the pigmentation of skin by increasing melanin production in melanocytes. Functionally, increases the pigmentation of skin by increasing melanin production in melanocytes. Endogenous orexigenic opiate. In terms of biological role, endogenous opiate. The sequence is that of Pro-opiomelanocortin (pomc) from Pelophylax ridibundus (Marsh frog).